The primary structure comprises 254 residues: Small ribosomal subunit protein uS2 (254 aa).

It belongs to the universal ribosomal protein uS2 family.

The protein is Small ribosomal subunit protein uS2 of Legionella pneumophila (strain Lens).